A 372-amino-acid polypeptide reads, in one-letter code: N-acetylneuraminate-9-phosphate synthase (372 aa).

The AFP-like domain occupies 314-372 (SIVAARNLNKGYRLQLADMAIKVSEPSGLTAEDFLDLVGKELADNIGEDEPILGNSIIN).

The enzyme catalyses aldehydo-N-acetyl-D-mannosamine 6-phosphate + phosphoenolpyruvate + H2O = N-acetylneuraminate 9-phosphate + phosphate. It carries out the reaction aldehydo-D-mannose 6-phosphate + phosphoenolpyruvate + H2O = 3-deoxy-D-glycero-beta-D-galacto-non-2-ulopyranosonate 9-phosphate + phosphate. Catalyzes the condensation of phosphoenolpyruvate (PEP) and N-acetylmannosamine 6-phosphate (ManNAc-6-P) or D-mannose 6-phosphate (Man-6-P) to generate the phosphorylated forms of both the sialic acids N-acetylneuraminic acid (Neu5Ac) and deaminoneuraminic acid (KDN), respectively. Essential for biosynthesis of sialic acids in neurons of the central nervous system. The polypeptide is N-acetylneuraminate-9-phosphate synthase (Drosophila melanogaster (Fruit fly)).